A 335-amino-acid polypeptide reads, in one-letter code: MDERIISSETVDAEEVSFETSLRPQNLSQYIGQDKVKNNLTVFIEAATLRNEALDHVLLYGPPGLGKTTLAMVIAAEMGSQIKTTSGPAIERPGDLATILTSLEPGDVLFIDEIHRLSRAIEEILYPAMEDYCLDIVIGTGPTARSVRLDLPPFTLIGATTRAGLLSAPLRDRFGVIDHLEFYTEEQLTEIVLRTSNILDTKIDDLGAREIARRSRGTPRIANRLLKRVRDFAQVRGNGTVTEKLAKEALTLLQVDPRGLDTIDQKLLHTIIQSFRGGPVGLDTIAASIGEERETIEDMQEPYLLQIGFLQRTPRGRIATETAYNHLGISYEKEV.

Positions 1–183 are large ATPase domain (RuvB-L); it reads MDERIISSET…FGVIDHLEFY (183 aa). ATP is bound by residues Leu22, Arg23, Gly64, Lys67, Thr68, Thr69, 130–132, Arg173, Tyr183, and Arg220; that span reads EDY. Position 68 (Thr68) interacts with Mg(2+). Positions 184-254 are small ATPAse domain (RuvB-S); sequence TEEQLTEIVL…LAKEALTLLQ (71 aa). Residues 257–335 form a head domain (RuvB-H) region; it reads PRGLDTIDQK…HLGISYEKEV (79 aa). Positions 293, 312, and 317 each coordinate DNA.

The protein belongs to the RuvB family. Homohexamer. Forms an RuvA(8)-RuvB(12)-Holliday junction (HJ) complex. HJ DNA is sandwiched between 2 RuvA tetramers; dsDNA enters through RuvA and exits via RuvB. An RuvB hexamer assembles on each DNA strand where it exits the tetramer. Each RuvB hexamer is contacted by two RuvA subunits (via domain III) on 2 adjacent RuvB subunits; this complex drives branch migration. In the full resolvosome a probable DNA-RuvA(4)-RuvB(12)-RuvC(2) complex forms which resolves the HJ.

The protein resides in the cytoplasm. The enzyme catalyses ATP + H2O = ADP + phosphate + H(+). In terms of biological role, the RuvA-RuvB-RuvC complex processes Holliday junction (HJ) DNA during genetic recombination and DNA repair, while the RuvA-RuvB complex plays an important role in the rescue of blocked DNA replication forks via replication fork reversal (RFR). RuvA specifically binds to HJ cruciform DNA, conferring on it an open structure. The RuvB hexamer acts as an ATP-dependent pump, pulling dsDNA into and through the RuvAB complex. RuvB forms 2 homohexamers on either side of HJ DNA bound by 1 or 2 RuvA tetramers; 4 subunits per hexamer contact DNA at a time. Coordinated motions by a converter formed by DNA-disengaged RuvB subunits stimulates ATP hydrolysis and nucleotide exchange. Immobilization of the converter enables RuvB to convert the ATP-contained energy into a lever motion, pulling 2 nucleotides of DNA out of the RuvA tetramer per ATP hydrolyzed, thus driving DNA branch migration. The RuvB motors rotate together with the DNA substrate, which together with the progressing nucleotide cycle form the mechanistic basis for DNA recombination by continuous HJ branch migration. Branch migration allows RuvC to scan DNA until it finds its consensus sequence, where it cleaves and resolves cruciform DNA. The chain is Holliday junction branch migration complex subunit RuvB from Listeria monocytogenes serotype 4b (strain CLIP80459).